Here is a 360-residue protein sequence, read N- to C-terminus: Phenylalanine--tRNA ligase alpha subunit (360 aa).

E260 contributes to the Mg(2+) binding site.

Belongs to the class-II aminoacyl-tRNA synthetase family. Phe-tRNA synthetase alpha subunit type 1 subfamily. In terms of assembly, tetramer of two alpha and two beta subunits. Requires Mg(2+) as cofactor.

The protein localises to the cytoplasm. The enzyme catalyses tRNA(Phe) + L-phenylalanine + ATP = L-phenylalanyl-tRNA(Phe) + AMP + diphosphate + H(+). In Bradyrhizobium diazoefficiens (strain JCM 10833 / BCRC 13528 / IAM 13628 / NBRC 14792 / USDA 110), this protein is Phenylalanine--tRNA ligase alpha subunit.